We begin with the raw amino-acid sequence, 239 residues long: MSKNSKAYKEAAEKIDRDRVYSPLEAAKLAKETSSKKQDATVEVAIRLGVDPRKADQMVRGTVNLPHGTGKTARVAVFAVGEKAEAAVAAGADVVGSDDLIEKIQGGFLDFDAAIATPDQMAKVGRIARILGPRGLMPNPKTGTVTPDVTKAVNDIKGGKINFRVDKQANLHFVIGKASFDEKALAENYGAALDEILRAKPSSSKGRYLKKVVVSTTTGPGIPVDPTVTRNFTEEPAQS.

This sequence belongs to the universal ribosomal protein uL1 family. As to quaternary structure, part of the 50S ribosomal subunit.

Functionally, binds directly to 23S rRNA. The L1 stalk is quite mobile in the ribosome, and is involved in E site tRNA release. Protein L1 is also a translational repressor protein, it controls the translation of the L11 operon by binding to its mRNA. This is Large ribosomal subunit protein uL1 from Mycolicibacterium gilvum (strain PYR-GCK) (Mycobacterium gilvum (strain PYR-GCK)).